The following is a 264-amino-acid chain: Adenosylcobinamide-GDP ribazoletransferase (264 aa).

The next 7 helical transmembrane spans lie at 10–30 (LFFIALQFFTRVPVPAWVGYT), 43–63 (LVGAWVGGVAALVLWLAAQVW), 113–133 (LGSYGALGLVGVLGLKAVALY), 141–161 (VQALIALVWAHAVSRAVPVAL), 183–203 (VSDAGLAAALGWAALACAAAW), 205–225 (LGASAFTLACAALGVIALAAF), and 243–263 (GAAQQLCELAAYLGWLAGVWF).

This sequence belongs to the CobS family. Mg(2+) serves as cofactor.

The protein resides in the cell inner membrane. It catalyses the reaction alpha-ribazole + adenosylcob(III)inamide-GDP = adenosylcob(III)alamin + GMP + H(+). The enzyme catalyses alpha-ribazole 5'-phosphate + adenosylcob(III)inamide-GDP = adenosylcob(III)alamin 5'-phosphate + GMP + H(+). The protein operates within cofactor biosynthesis; adenosylcobalamin biosynthesis; adenosylcobalamin from cob(II)yrinate a,c-diamide: step 7/7. Joins adenosylcobinamide-GDP and alpha-ribazole to generate adenosylcobalamin (Ado-cobalamin). Also synthesizes adenosylcobalamin 5'-phosphate from adenosylcobinamide-GDP and alpha-ribazole 5'-phosphate. This is Adenosylcobinamide-GDP ribazoletransferase from Leptothrix cholodnii (strain ATCC 51168 / LMG 8142 / SP-6) (Leptothrix discophora (strain SP-6)).